The primary structure comprises 232 residues: Ribonuclease 3 (232 aa).

An RNase III domain is found at 5 to 134; it reads QTVLKNHFAI…FLGALLLDKD (130 aa). E47 contributes to the Mg(2+) binding site. D51 is a catalytic residue. Residues D120 and E123 each coordinate Mg(2+). The active site involves E123. The DRBM domain occupies 160-229; sequence DYKTHLQELL…AKNAVEKGLD (70 aa).

Belongs to the ribonuclease III family. Homodimer. Requires Mg(2+) as cofactor.

It is found in the cytoplasm. The enzyme catalyses Endonucleolytic cleavage to 5'-phosphomonoester.. Functionally, digests double-stranded RNA. Involved in the processing of primary rRNA transcript to yield the immediate precursors to the large and small rRNAs (23S and 16S). Processes some mRNAs, and tRNAs when they are encoded in the rRNA operon. Processes pre-crRNA and tracrRNA of type II CRISPR loci if present in the organism. This chain is Ribonuclease 3, found in Streptococcus pneumoniae (strain Hungary19A-6).